A 525-amino-acid chain; its full sequence is GMP synthase [glutamine-hydrolyzing] (525 aa).

The 190-residue stretch at 16–205 (PVLVVDFGAQ…LHDFAGLGAD (190 aa)) folds into the Glutamine amidotransferase type-1 domain. Cysteine 93 (nucleophile) is an active-site residue. Active-site residues include histidine 179 and glutamate 181. The GMPS ATP-PPase domain occupies 206-399 (WTAANIAGVL…LGLPEEIVAR (194 aa)). 233–239 (SGGVDSA) contributes to the ATP binding site.

In terms of assembly, homodimer.

The catalysed reaction is XMP + L-glutamine + ATP + H2O = GMP + L-glutamate + AMP + diphosphate + 2 H(+). It participates in purine metabolism; GMP biosynthesis; GMP from XMP (L-Gln route): step 1/1. Catalyzes the synthesis of GMP from XMP. The chain is GMP synthase [glutamine-hydrolyzing] from Mycolicibacterium paratuberculosis (strain ATCC BAA-968 / K-10) (Mycobacterium paratuberculosis).